Consider the following 433-residue polypeptide: Signal recognition particle 54 kDa protein (433 aa).

Residues 106–113 (GVEGSGKT), 186–190 (DTAGR), and 244–247 (TKMD) each bind GTP.

This sequence belongs to the GTP-binding SRP family. SRP54 subfamily. Part of the signal recognition particle protein translocation system, which is composed of SRP and FtsY. Archaeal SRP consists of a 7S RNA molecule of 300 nucleotides and two protein subunits: SRP54 and SRP19.

Its subcellular location is the cytoplasm. The enzyme catalyses GTP + H2O = GDP + phosphate + H(+). Functionally, involved in targeting and insertion of nascent membrane proteins into the cytoplasmic membrane. Binds to the hydrophobic signal sequence of the ribosome-nascent chain (RNC) as it emerges from the ribosomes. The SRP-RNC complex is then targeted to the cytoplasmic membrane where it interacts with the SRP receptor FtsY. In Pyrobaculum neutrophilum (strain DSM 2338 / JCM 9278 / NBRC 100436 / V24Sta) (Thermoproteus neutrophilus), this protein is Signal recognition particle 54 kDa protein.